Reading from the N-terminus, the 804-residue chain is Leucine--tRNA ligase (804 aa).

The 'HIGH' region signature appears at 39 to 50 (PYPSGKGLHVGH). The 'KMSKS' region motif lies at 573–577 (KMSKS). K576 is a binding site for ATP.

The protein belongs to the class-I aminoacyl-tRNA synthetase family.

It localises to the cytoplasm. The catalysed reaction is tRNA(Leu) + L-leucine + ATP = L-leucyl-tRNA(Leu) + AMP + diphosphate. The sequence is that of Leucine--tRNA ligase from Lactobacillus delbrueckii subsp. bulgaricus (strain ATCC BAA-365 / Lb-18).